The primary structure comprises 181 residues: Thioredoxin-like protein CITRX1, chloroplastic (181 aa).

The segment at 1 to 20 (MQAATLSFHPSAPPPQTSAC) is disordered. The transit peptide at 1–70 (MQAATLSFHP…PAVATGKYVR (70 aa)) directs the protein to the chloroplast. The 111-residue stretch at 71 to 181 (EDYLVKKVSA…MMRDIINNDL (111 aa)) folds into the Thioredoxin domain. Catalysis depends on nucleophile residues C104 and C107. C104 and C107 are oxidised to a cystine.

This sequence belongs to the thioredoxin family. Plant CITRX-type subfamily.

It is found in the plastid. It localises to the chloroplast. In terms of biological role, probable thiol-disulfide oxidoreductase that may play a role in proper chloroplast development. In Nicotiana benthamiana, this protein is Thioredoxin-like protein CITRX1, chloroplastic.